We begin with the raw amino-acid sequence, 510 residues long: ATP synthase subunit alpha, chloroplastic (510 aa).

Residue 170 to 177 (GDRQTGKT) coordinates ATP.

The protein belongs to the ATPase alpha/beta chains family. As to quaternary structure, F-type ATPases have 2 components, CF(1) - the catalytic core - and CF(0) - the membrane proton channel. CF(1) has five subunits: alpha(3), beta(3), gamma(1), delta(1), epsilon(1). CF(0) has four main subunits: a, b, b' and c.

Its subcellular location is the plastid. It is found in the chloroplast thylakoid membrane. The enzyme catalyses ATP + H2O + 4 H(+)(in) = ADP + phosphate + 5 H(+)(out). Its function is as follows. Produces ATP from ADP in the presence of a proton gradient across the membrane. The alpha chain is a regulatory subunit. This is ATP synthase subunit alpha, chloroplastic from Lotus japonicus (Lotus corniculatus var. japonicus).